A 147-amino-acid chain; its full sequence is Large ribosomal subunit protein uL15 (147 aa).

The segment at 1–59 (MKLYELKPAPGSKKNRKRVGRGESSGHGKTSTRGHKGQWARSGGGVRPGFEGGQMPLTR) is disordered. Over residues 42–52 (SGGGVRPGFEG) the composition is skewed to gly residues.

This sequence belongs to the universal ribosomal protein uL15 family. Part of the 50S ribosomal subunit.

In terms of biological role, binds to the 23S rRNA. In Caldicellulosiruptor bescii (strain ATCC BAA-1888 / DSM 6725 / KCTC 15123 / Z-1320) (Anaerocellum thermophilum), this protein is Large ribosomal subunit protein uL15.